We begin with the raw amino-acid sequence, 1042 residues long: Signal-induced proliferation-associated protein 1 (1042 aa).

Disordered stretches follow at residues 1-87 (MPMW…TSTR) and 132-153 (SQGM…EDQA). The residue at position 64 (Thr64) is a Phosphothreonine. The residue at position 67 (Ser67) is a Phosphoserine. Residues 134-146 (GMGSHSEASSGTL) are compositionally biased toward polar residues. 3 positions are modified to phosphoserine: Ser182, Ser304, and Ser314. In terms of domain architecture, Rap-GAP spans 321-539 (LLTLDEQVLS…RTRQQYLQDL (219 aa)). A PDZ domain is found at 687–763 (ELALPRDGQG…VCVTVLPPDE (77 aa)). 3 positions are modified to phosphoserine: Ser817, Ser839, and Ser912. Residues 830-903 (EFLHSQNSLS…PAPELRASFL (74 aa)) are disordered. The span at 832 to 845 (LHSQNSLSPRSSLS) shows a compositional bias: low complexity. The disordered stretch occupies residues 946-980 (LSREGQPIPESGDPKGTPKSDAEPEPGNLSEKVSH). Residues 957–967 (GDPKGTPKSDA) are compositionally biased toward basic and acidic residues. A coiled-coil region spans residues 972 to 1034 (GNLSEKVSHL…TRLLLASKQL (63 aa)).

In terms of assembly, interacts with RRP1B; the interaction leads to inhibition of SIPA1 GTPase activity. Expressed in fetal as well as in adult tissues. Expressed abundantly in the lymphoid tissues such as thymus, spleen and peripheral blood lymphocytes and also shows a significant expression in the spinal cord.

It is found in the nucleus. The protein resides in the cytoplasm. Its subcellular location is the perinuclear region. The protein localises to the endomembrane system. GTPase activator for the nuclear Ras-related regulatory proteins Rap1 and Rap2 in vitro, converting them to the putatively inactive GDP-bound state. Affects cell cycle progression. The polypeptide is Signal-induced proliferation-associated protein 1 (SIPA1) (Homo sapiens (Human)).